A 268-amino-acid chain; its full sequence is 1,4-dihydroxy-2-naphthoyl-CoA synthase (268 aa).

Substrate is bound by residues 30-31, 70-74, 114-118, Ser-140, and Ser-146; these read VL, VGGDQ, and YAVGG. 139–141 contributes to the hydrogencarbonate binding site; the sequence is QSG.

It belongs to the enoyl-CoA hydratase/isomerase family. MenB subfamily. It depends on hydrogencarbonate as a cofactor.

The protein localises to the plastid. Its subcellular location is the chloroplast. It carries out the reaction 2-succinylbenzoyl-CoA + H(+) = 1,4-dihydroxy-2-naphthoyl-CoA + H2O. It participates in quinol/quinone metabolism; 1,4-dihydroxy-2-naphthoate biosynthesis; 1,4-dihydroxy-2-naphthoate from chorismate: step 6/7. The protein operates within quinol/quinone metabolism; menaquinone biosynthesis. Its function is as follows. Converts o-succinylbenzoyl-CoA (OSB-CoA) to 1,4-dihydroxy-2-naphthoyl-CoA (DHNA-CoA). This chain is 1,4-dihydroxy-2-naphthoyl-CoA synthase (menB), found in Cyanidium caldarium (Red alga).